The chain runs to 271 residues: Type III pantothenate kinase (271 aa).

ATP is bound at residue 6–13; sequence DVRNTHTV. 109–112 contributes to the substrate binding site; sequence GADR. The active-site Proton acceptor is the D111. D131 lines the K(+) pocket. S134 is a binding site for ATP. Residue T186 participates in substrate binding.

Belongs to the type III pantothenate kinase family. In terms of assembly, homodimer. NH4(+) is required as a cofactor. It depends on K(+) as a cofactor.

The protein resides in the cytoplasm. It carries out the reaction (R)-pantothenate + ATP = (R)-4'-phosphopantothenate + ADP + H(+). It participates in cofactor biosynthesis; coenzyme A biosynthesis; CoA from (R)-pantothenate: step 1/5. Functionally, catalyzes the phosphorylation of pantothenate (Pan), the first step in CoA biosynthesis. The protein is Type III pantothenate kinase of Mycolicibacterium smegmatis (strain ATCC 700084 / mc(2)155) (Mycobacterium smegmatis).